The primary structure comprises 353 residues: D-alanine--D-alanine ligase A (353 aa).

The region spanning 141–346 (KRLVNEAGLS…YPEIINRLVA (206 aa)) is the ATP-grasp domain. Residue 169–224 (EQALGLPIFIKPARQGSSVGVHKVVTEADYQAAMSDGFIYDDKLLAEEFIQAREVE) participates in ATP binding. The Mg(2+) site is built by aspartate 300, glutamate 313, and asparagine 315.

The protein belongs to the D-alanine--D-alanine ligase family. It depends on Mg(2+) as a cofactor. The cofactor is Mn(2+).

It localises to the cytoplasm. The enzyme catalyses 2 D-alanine + ATP = D-alanyl-D-alanine + ADP + phosphate + H(+). Its pathway is cell wall biogenesis; peptidoglycan biosynthesis. Functionally, cell wall formation. This is D-alanine--D-alanine ligase A from Brucella melitensis biotype 1 (strain ATCC 23456 / CCUG 17765 / NCTC 10094 / 16M).